A 77-amino-acid polypeptide reads, in one-letter code: UPF0270 protein Spro_4577 (77 aa).

Belongs to the UPF0270 family.

This is UPF0270 protein Spro_4577 from Serratia proteamaculans (strain 568).